Consider the following 293-residue polypeptide: Xylanase inhibitor protein XIP (293 aa).

A signal peptide spans 1-21 (MALRRLAALLSLAVLLSAGLA). The 263-residue stretch at 31 to 293 (GDTVIIWGRN…DKKTGFTAHL (263 aa)) folds into the GH18 domain. 2 disulfide bridges follow: cysteine 50-cysteine 92 and cysteine 189-cysteine 218.

This sequence belongs to the glycosyl hydrolase 18 family. Xylanase inhibitor subfamily. In terms of tissue distribution, expressed in mature grain.

Its subcellular location is the secreted. Functionally, fungal xylanase inhibitor. Possesses competitive inhibiting activity against several fungal endo-1,4-beta-D-xylanases belonging to glycoside hydrolase family 10 (GH10) and family 11 (GH11). May function in plant defense against secreted fungal pathogen xylanases. Is similar to class III chitinases, but does not exhibit chitinase activity. This chain is Xylanase inhibitor protein XIP, found in Oryza sativa subsp. japonica (Rice).